Reading from the N-terminus, the 100-residue chain is UPF0248 protein APE_0939 (100 aa).

This sequence belongs to the UPF0248 family.

This chain is UPF0248 protein APE_0939, found in Aeropyrum pernix (strain ATCC 700893 / DSM 11879 / JCM 9820 / NBRC 100138 / K1).